A 331-amino-acid chain; its full sequence is Biotin synthase (331 aa).

Positions 46–275 constitute a Radical SAM core domain; the sequence is YYGKKVKLNM…TKEIRISGGR (230 aa). 3 residues coordinate [4Fe-4S] cluster: Cys64, Cys68, and Cys71. The [2Fe-2S] cluster site is built by Cys108, Cys140, Cys200, and Arg270.

It belongs to the radical SAM superfamily. Biotin synthase family. Homodimer. Requires [4Fe-4S] cluster as cofactor. [2Fe-2S] cluster serves as cofactor.

It carries out the reaction (4R,5S)-dethiobiotin + (sulfur carrier)-SH + 2 reduced [2Fe-2S]-[ferredoxin] + 2 S-adenosyl-L-methionine = (sulfur carrier)-H + biotin + 2 5'-deoxyadenosine + 2 L-methionine + 2 oxidized [2Fe-2S]-[ferredoxin]. It participates in cofactor biosynthesis; biotin biosynthesis; biotin from 7,8-diaminononanoate: step 2/2. Catalyzes the conversion of dethiobiotin (DTB) to biotin by the insertion of a sulfur atom into dethiobiotin via a radical-based mechanism. The polypeptide is Biotin synthase (Lysinibacillus sphaericus (strain C3-41)).